A 365-amino-acid polypeptide reads, in one-letter code: Transcription factor MYB93 (365 aa).

HTH myb-type domains lie at 9-61 and 62-116; these read ENGL…TNYL and RPDI…KKKL. 2 DNA-binding regions (H-T-H motif) span residues 37 to 61 and 89 to 112; these read WRALPKLADLNRCGKSCRLRWTNYL and WSAIATHLQGRTDNEIKNFWNTHL.

In terms of assembly, interacts with FBX5.

It localises to the nucleus. It is found in the cytoplasm. Its function is as follows. Transcription factor that acts as a negative regulator of lateral root (LR) development. Required for normal auxin responses during LR development. May be part of a negative feedback loop stimulated specifically in the endodermis upon LR initiation to ensure that LRs are formed only in the correct place. This chain is Transcription factor MYB93, found in Arabidopsis thaliana (Mouse-ear cress).